The primary structure comprises 97 residues: uncharacterized protein (97 aa).

This is an uncharacterized protein from Escherichia coli O6:K15:H31 (strain 536 / UPEC).